We begin with the raw amino-acid sequence, 396 residues long: Elongation factor Tu 2 (396 aa).

The 197-residue stretch at lysine 10–lysine 206 folds into the tr-type G domain. The tract at residues glycine 19 to threonine 26 is G1. Residue glycine 19–threonine 26 coordinates GTP. Threonine 26 lines the Mg(2+) pocket. The interval glycine 60–serine 64 is G2. The interval aspartate 81–glycine 84 is G3. GTP-binding positions include aspartate 81–histidine 85 and asparagine 136–aspartate 139. The segment at asparagine 136 to aspartate 139 is G4. The interval serine 174–leucine 176 is G5.

The protein belongs to the TRAFAC class translation factor GTPase superfamily. Classic translation factor GTPase family. EF-Tu/EF-1A subfamily. As to quaternary structure, monomer.

It localises to the cytoplasm. The catalysed reaction is GTP + H2O = GDP + phosphate + H(+). In terms of biological role, GTP hydrolase that promotes the GTP-dependent binding of aminoacyl-tRNA to the A-site of ribosomes during protein biosynthesis. In Ruthia magnifica subsp. Calyptogena magnifica, this protein is Elongation factor Tu 2.